The sequence spans 81 residues: Protein RALF-like 6 (81 aa).

The signal sequence occupies residues 1 to 29 (MAAHKKSHIRIFFVSVMIILSLFSGFGEG). Cystine bridges form between Cys-46-Cys-54 and Cys-66-Cys-72.

Belongs to the plant rapid alkalinization factor (RALF) family.

The protein localises to the secreted. In terms of biological role, cell signaling peptide that may regulate plant stress, growth, and development. Mediates a rapid alkalinization of extracellular space by mediating a transient increase in the cytoplasmic Ca(2+) concentration leading to a calcium-dependent signaling events through a cell surface receptor and a concomitant activation of some intracellular mitogen-activated protein kinases. The chain is Protein RALF-like 6 (RALFL6) from Arabidopsis thaliana (Mouse-ear cress).